A 342-amino-acid polypeptide reads, in one-letter code: Platelet-activating factor receptor (342 aa).

The Extracellular portion of the chain corresponds to 1–16 (MEPNNSFRVDSEFRYT). N-linked (GlcNAc...) asparagine glycosylation occurs at asparagine 4. Residues 17 to 38 (LFPIFYSIVFVLGVIANSYVLW) form a helical membrane-spanning segment. Topologically, residues 39-54 (VFARLYPSKKFNEIKI) are cytoplasmic. Residues 55-74 (FMVNLTMADLLFLVTLPLWI) form a helical membrane-spanning segment. The Extracellular segment spans residues 75-91 (VYYYNQGDWILPKFLCN). A disulfide bridge links cysteine 90 with cysteine 173. Residues 92 to 113 (LAGCFFFINTYCSVAFLAVITY) form a helical membrane-spanning segment. Topologically, residues 114–133 (NRFQAVTRPIKTAQATTRKR) are cytoplasmic. A helical transmembrane segment spans residues 134–155 (GFLLSLIIWVSIVGAASYFFVL). At 156-184 (DSTNSEPKKTGSGNITRCFEHYEKGSIPV) the chain is on the extracellular side. An N-linked (GlcNAc...) asparagine glycan is attached at asparagine 169. A helical transmembrane segment spans residues 185–205 (LIIHIFLVFSFFLVFLIILFC). The Cytoplasmic segment spans residues 206-233 (NLVIIRTLLTQQVQMQRNAEVKRRALWM). A helical membrane pass occupies residues 234 to 254 (VCTVLAVFVICFVPHHLVQLP). Residues 255–276 (WTLAELGFQDTDFHQGINDAHQ) are Extracellular-facing. A helical transmembrane segment spans residues 277 to 296 (VTLCLLSTNCVLDPIIYCFL). Residues 297 to 342 (TKKFRKHLTEKLYSMRESRKCSRATSETGTEVVVQLKDAPIKSLKY) are Cytoplasmic-facing.

The protein belongs to the G-protein coupled receptor 1 family. In terms of assembly, interacts with ARRB1.

The protein localises to the cell membrane. Its function is as follows. Receptor for platelet activating factor, a chemotactic phospholipid mediator that possesses potent inflammatory, smooth-muscle contractile and hypotensive activity. Seems to mediate its action via a G protein that activates a phosphatidylinositol-calcium second messenger system. In Capra hircus (Goat), this protein is Platelet-activating factor receptor.